Reading from the N-terminus, the 394-residue chain is 8-amino-7-oxononanoate synthase (394 aa).

Residue Arg21 coordinates substrate. Residue 112-113 (GY) coordinates pyridoxal 5'-phosphate. Residue His137 participates in substrate binding. Pyridoxal 5'-phosphate contacts are provided by Ser183, His211, and Thr239. Lys242 carries the post-translational modification N6-(pyridoxal phosphate)lysine. Substrate is bound at residue Thr358.

It belongs to the class-II pyridoxal-phosphate-dependent aminotransferase family. BioF subfamily. As to quaternary structure, homodimer. It depends on pyridoxal 5'-phosphate as a cofactor.

It carries out the reaction 6-carboxyhexanoyl-[ACP] + L-alanine + H(+) = (8S)-8-amino-7-oxononanoate + holo-[ACP] + CO2. It functions in the pathway cofactor biosynthesis; biotin biosynthesis. Its function is as follows. Catalyzes the decarboxylative condensation of pimeloyl-[acyl-carrier protein] and L-alanine to produce 8-amino-7-oxononanoate (AON), [acyl-carrier protein], and carbon dioxide. The protein is 8-amino-7-oxononanoate synthase of Paraburkholderia phymatum (strain DSM 17167 / CIP 108236 / LMG 21445 / STM815) (Burkholderia phymatum).